The following is a 287-amino-acid chain: Eukaryotic translation initiation factor 3 subunit F (287 aa).

One can recognise an MPN domain in the interval 12-142; it reads VRVHPVVLFQ…IKAYVCVSLG (131 aa).

The protein belongs to the eIF-3 subunit F family. As to quaternary structure, component of the eukaryotic translation initiation factor 3 (eIF-3) complex.

It localises to the cytoplasm. Functionally, component of the eukaryotic translation initiation factor 3 (eIF-3) complex, which is involved in protein synthesis of a specialized repertoire of mRNAs and, together with other initiation factors, stimulates binding of mRNA and methionyl-tRNAi to the 40S ribosome. The eIF-3 complex specifically targets and initiates translation of a subset of mRNAs involved in cell proliferation. In Culex quinquefasciatus (Southern house mosquito), this protein is Eukaryotic translation initiation factor 3 subunit F.